A 619-amino-acid polypeptide reads, in one-letter code: Phosphoenolpyruvate carboxykinase [GTP] (619 aa).

Substrate contacts are provided by residues arginine 81 and 230 to 232; that span reads YGG. Lysine 239 and histidine 259 together coordinate Mn(2+). Serine 281 is a substrate binding site. GTP is bound at residue 282–287; the sequence is ACGKTN. The active site involves cysteine 283. Mn(2+) is bound at residue aspartate 306. 399-401 lines the substrate pocket; it reads NSR. Residues arginine 401, arginine 432, and 525 to 528 contribute to the GTP site; that span reads YGQN.

The protein belongs to the phosphoenolpyruvate carboxykinase [GTP] family. Monomer. Mn(2+) serves as cofactor.

It carries out the reaction oxaloacetate + GTP = phosphoenolpyruvate + GDP + CO2. Its function is as follows. In parasitic nematodes PEPCK carboxylates phosphoenolpyruvate to oxaloacetate thus introducing the products of glycolysis to mitochondrial metabolism. Functionally, catalyzes the conversion of oxaloacetate (OAA) to phosphoenolpyruvate (PEP), the rate-limiting step in the metabolic pathway that produces glucose from lactate and other precursors derived from the citric acid cycle. The sequence is that of Phosphoenolpyruvate carboxykinase [GTP] (PEPCK) from Haemonchus contortus (Barber pole worm).